Reading from the N-terminus, the 179-residue chain is ATP synthase subunit delta (179 aa).

This sequence belongs to the ATPase delta chain family. F-type ATPases have 2 components, F(1) - the catalytic core - and F(0) - the membrane proton channel. F(1) has five subunits: alpha(3), beta(3), gamma(1), delta(1), epsilon(1). F(0) has three main subunits: a(1), b(2) and c(10-14). The alpha and beta chains form an alternating ring which encloses part of the gamma chain. F(1) is attached to F(0) by a central stalk formed by the gamma and epsilon chains, while a peripheral stalk is formed by the delta and b chains.

It is found in the cell membrane. In terms of biological role, f(1)F(0) ATP synthase produces ATP from ADP in the presence of a proton or sodium gradient. F-type ATPases consist of two structural domains, F(1) containing the extramembraneous catalytic core and F(0) containing the membrane proton channel, linked together by a central stalk and a peripheral stalk. During catalysis, ATP synthesis in the catalytic domain of F(1) is coupled via a rotary mechanism of the central stalk subunits to proton translocation. Functionally, this protein is part of the stalk that links CF(0) to CF(1). It either transmits conformational changes from CF(0) to CF(1) or is implicated in proton conduction. This Listeria welshimeri serovar 6b (strain ATCC 35897 / DSM 20650 / CCUG 15529 / CIP 8149 / NCTC 11857 / SLCC 5334 / V8) protein is ATP synthase subunit delta.